A 246-amino-acid polypeptide reads, in one-letter code: Ribulose-phosphate 3-epimerase (246 aa).

S9 lines the substrate pocket. Residues H34, D36, and H83 each coordinate a divalent metal cation. D36 serves as the catalytic Proton acceptor. Substrate contacts are provided by residues H83, 159–162, 188–190, and 210–212; these read GFGG, DGG, and GTS. Position 188 (D188) interacts with a divalent metal cation. D188 functions as the Proton donor in the catalytic mechanism.

The protein belongs to the ribulose-phosphate 3-epimerase family. The cofactor is Co(2+). Fe(2+) is required as a cofactor. Requires Mn(2+) as cofactor. Zn(2+) serves as cofactor.

The enzyme catalyses D-ribulose 5-phosphate = D-xylulose 5-phosphate. It functions in the pathway carbohydrate degradation; pentose phosphate pathway; D-xylulose 5-phosphate from D-ribulose 5-phosphate (non-oxidative stage): step 1/1. Its function is as follows. Catalyzes the reversible epimerization of D-ribulose 5-phosphate to D-xylulose 5-phosphate. The chain is Ribulose-phosphate 3-epimerase (RPE1) from Candida glabrata (strain ATCC 2001 / BCRC 20586 / JCM 3761 / NBRC 0622 / NRRL Y-65 / CBS 138) (Yeast).